The sequence spans 259 residues: Probable dihydroorotate dehydrogenase B (NAD(+)), electron transfer subunit (259 aa).

Residues 1–89 (MLPLNATIVQ…RGPFGKGFSL (89 aa)) form the FAD-binding FR-type domain. [2Fe-2S] cluster-binding residues include Cys211, Cys216, Cys219, and Cys229.

Belongs to the PyrK family. Heterotetramer of 2 PyrK and 2 PyrD type B subunits. [2Fe-2S] cluster is required as a cofactor. Requires FAD as cofactor.

It functions in the pathway pyrimidine metabolism; UMP biosynthesis via de novo pathway; orotate from (S)-dihydroorotate (NAD(+) route): step 1/1. Functionally, responsible for channeling the electrons from the oxidation of dihydroorotate from the FMN redox center in the PyrD type B subunit to the ultimate electron acceptor NAD(+). The protein is Probable dihydroorotate dehydrogenase B (NAD(+)), electron transfer subunit of Methanosarcina barkeri (strain Fusaro / DSM 804).